We begin with the raw amino-acid sequence, 130 residues long: Methylglyoxal synthase (130 aa).

In terms of domain architecture, MGS-like spans 1 to 130 (MSKPRIALIA…DLARNMQDVC (130 aa)). Substrate-binding positions include His-11, Lys-15, 37–40 (TGTT), and 57–58 (SG). Asp-63 (proton donor/acceptor) is an active-site residue. His-90 lines the substrate pocket.

This sequence belongs to the methylglyoxal synthase family.

It catalyses the reaction dihydroxyacetone phosphate = methylglyoxal + phosphate. Catalyzes the formation of methylglyoxal from dihydroxyacetone phosphate. This chain is Methylglyoxal synthase, found in Burkholderia orbicola (strain AU 1054).